The primary structure comprises 568 residues: Serine/threonine-protein kinase WNK2 (568 aa).

In terms of domain architecture, Protein kinase spans 24-281; it reads GRYDEILGKG…ALELLQDPFL (258 aa). Residues 104–107 and Lys154 each bind ATP; that span reads TELF. The active-site Proton acceptor is Asp171. Residues 453 to 473 are disordered; that stretch reads SSGEKSHHNHHEFDSSEDKSC. The segment covering 463-472 has biased composition (basic and acidic residues); it reads HEFDSSEDKS.

Belongs to the protein kinase superfamily. Ser/Thr protein kinase family. WNK subfamily. In terms of processing, autophosphorylated.

The catalysed reaction is L-seryl-[protein] + ATP = O-phospho-L-seryl-[protein] + ADP + H(+). It carries out the reaction L-threonyl-[protein] + ATP = O-phospho-L-threonyl-[protein] + ADP + H(+). Regulates flowering time by modulating the photoperiod pathway. Possesses kinase activity in vitro. In Arabidopsis thaliana (Mouse-ear cress), this protein is Serine/threonine-protein kinase WNK2 (WNK2).